The primary structure comprises 175 residues: Major MR/P fimbria protein (175 aa).

Positions 1–23 (MKLNKLALVLGLGLSVVAGSALA) are cleaved as a signal peptide. Residues cysteine 42 and cysteine 81 are joined by a disulfide bond.

This sequence belongs to the fimbrial protein family.

It localises to the fimbrium. Its function is as follows. Major structural component of mannose-resistant/proteus-like fimbriae of P.mirabilis. The polypeptide is Major MR/P fimbria protein (mrpA) (Proteus mirabilis (strain HI4320)).